The primary structure comprises 916 residues: Protein translocase subunit SecA (916 aa).

Residues Q87, 105-109, and D512 contribute to the ATP site; that span reads GEGKT. The interval 857 to 916 is disordered; it reads QHAEAPSMEQAVAGEEEELPEGPAPVVPLEPVRNEQKIGRNEPCPCGSGKKYKHCHGQLD. Zn(2+)-binding residues include C900, C902, C911, and H912. A compositionally biased stretch (basic residues) spans 906-916; that stretch reads KKYKHCHGQLD.

Belongs to the SecA family. In terms of assembly, monomer and homodimer. Part of the essential Sec protein translocation apparatus which comprises SecA, SecYEG and auxiliary proteins SecDF-YajC and YidC. Zn(2+) serves as cofactor.

The protein localises to the cell inner membrane. It is found in the cytoplasm. It catalyses the reaction ATP + H2O + cellular proteinSide 1 = ADP + phosphate + cellular proteinSide 2.. Functionally, part of the Sec protein translocase complex. Interacts with the SecYEG preprotein conducting channel. Has a central role in coupling the hydrolysis of ATP to the transfer of proteins into and across the cell membrane, serving both as a receptor for the preprotein-SecB complex and as an ATP-driven molecular motor driving the stepwise translocation of polypeptide chains across the membrane. The polypeptide is Protein translocase subunit SecA (Pseudomonas aeruginosa (strain LESB58)).